We begin with the raw amino-acid sequence, 298 residues long: GTP cyclohydrolase FolE2 (298 aa).

The protein belongs to the GTP cyclohydrolase IV family.

The catalysed reaction is GTP + H2O = 7,8-dihydroneopterin 3'-triphosphate + formate + H(+). It functions in the pathway cofactor biosynthesis; 7,8-dihydroneopterin triphosphate biosynthesis; 7,8-dihydroneopterin triphosphate from GTP: step 1/1. Converts GTP to 7,8-dihydroneopterin triphosphate. This chain is GTP cyclohydrolase FolE2, found in Azotobacter vinelandii (strain DJ / ATCC BAA-1303).